The sequence spans 465 residues: Cysteine--tRNA ligase (465 aa).

Cysteine 28 serves as a coordination point for Zn(2+). A 'HIGH' region motif is present at residues 30–40 (MTVYDYCHLGH). Zn(2+) is bound by residues cysteine 209, histidine 234, and glutamate 238. The short motif at 266-270 (KMSKS) is the 'KMSKS' region element. Lysine 269 is an ATP binding site.

It belongs to the class-I aminoacyl-tRNA synthetase family. In terms of assembly, monomer. It depends on Zn(2+) as a cofactor.

Its subcellular location is the cytoplasm. It catalyses the reaction tRNA(Cys) + L-cysteine + ATP = L-cysteinyl-tRNA(Cys) + AMP + diphosphate. The chain is Cysteine--tRNA ligase from Methylococcus capsulatus (strain ATCC 33009 / NCIMB 11132 / Bath).